The chain runs to 316 residues: Protoheme IX farnesyltransferase (316 aa).

The next 9 helical transmembrane spans lie at 32–52 (VMSL…GHIN), 53–73 (PVLG…SGAL), 93–113 (IPAG…LSGF), 116–136 (VILG…TIFF), 152–172 (NIVI…ACVT), 180–200 (TVLF…LALF), 221–241 (VTKH…VLPS), 252–271 (LVAA…VWRM), and 289–309 (IFYL…AILV).

The protein belongs to the UbiA prenyltransferase family. Protoheme IX farnesyltransferase subfamily.

The protein localises to the cell inner membrane. The catalysed reaction is heme b + (2E,6E)-farnesyl diphosphate + H2O = Fe(II)-heme o + diphosphate. It functions in the pathway porphyrin-containing compound metabolism; heme O biosynthesis; heme O from protoheme: step 1/1. Functionally, converts heme B (protoheme IX) to heme O by substitution of the vinyl group on carbon 2 of heme B porphyrin ring with a hydroxyethyl farnesyl side group. In Rhizobium etli (strain ATCC 51251 / DSM 11541 / JCM 21823 / NBRC 15573 / CFN 42), this protein is Protoheme IX farnesyltransferase.